A 151-amino-acid chain; its full sequence is Deoxyuridine 5'-triphosphate nucleotidohydrolase (151 aa).

Substrate is bound by residues 70 to 72 (RSG), Asn83, 87 to 89 (LID), and Met97.

The protein belongs to the dUTPase family. It depends on Mg(2+) as a cofactor.

The enzyme catalyses dUTP + H2O = dUMP + diphosphate + H(+). It participates in pyrimidine metabolism; dUMP biosynthesis; dUMP from dCTP (dUTP route): step 2/2. This enzyme is involved in nucleotide metabolism: it produces dUMP, the immediate precursor of thymidine nucleotides and it decreases the intracellular concentration of dUTP so that uracil cannot be incorporated into DNA. The sequence is that of Deoxyuridine 5'-triphosphate nucleotidohydrolase from Pseudomonas entomophila (strain L48).